Consider the following 155-residue polypeptide: Ribosome maturation factor RimP (155 aa).

This sequence belongs to the RimP family.

The protein resides in the cytoplasm. Functionally, required for maturation of 30S ribosomal subunits. The polypeptide is Ribosome maturation factor RimP (Lachnoclostridium phytofermentans (strain ATCC 700394 / DSM 18823 / ISDg) (Clostridium phytofermentans)).